A 484-amino-acid polypeptide reads, in one-letter code: Mitogen-activated protein kinase SLT2/MPK1 (484 aa).

Residues 23–318 (FQLIKEIGHG…VDEALEHPYL (296 aa)) enclose the Protein kinase domain. ATP is bound by residues 29 to 37 (IGHGAYGIV) and K54. Residue D153 is the Proton acceptor of the active site. Phosphothreonine is present on T190. Residues 190–192 (TEY) carry the TXY motif. At Y192 the chain carries Phosphotyrosine. Low complexity predominate over residues 383-392 (QQQQQQQQQP). 2 disordered regions span residues 383-403 (QQQQQQQQQPSDVDNGNAAAS) and 426-464 (IHSQNLPRHDADFPPRPQESMMEMRPATGNTADIPPQND).

This sequence belongs to the protein kinase superfamily. CMGC Ser/Thr protein kinase family. MAP kinase subfamily. In terms of assembly, interacts with RLM1. Mg(2+) is required as a cofactor. Post-translationally, dually phosphorylated on Thr-190 and Tyr-192, which activates the enzyme.

It carries out the reaction L-seryl-[protein] + ATP = O-phospho-L-seryl-[protein] + ADP + H(+). The enzyme catalyses L-threonyl-[protein] + ATP = O-phospho-L-threonyl-[protein] + ADP + H(+). With respect to regulation, activated by tyrosine and threonine phosphorylation by MKK1 and MKK2. Functionally, serine/threonine protein kinase involved in a signal transduction pathway that plays a role in yeast cell morphogenesis and cell growth. This pathway seems to start by SMP3; then involve the kinase PKC1 that may act the BCK1 kinase that then phosphorylates MKK1 and MKK2 which themselves phosphorylate the SLT2/MPK1 kinase which itself then phosphorylates and activates the transcription factor RLM1. Directly phosphorylates BCY1 upon TOR complex 1 (TORC1) inhibition. The polypeptide is Mitogen-activated protein kinase SLT2/MPK1 (SLT2) (Saccharomyces cerevisiae (strain ATCC 204508 / S288c) (Baker's yeast)).